A 139-amino-acid polypeptide reads, in one-letter code: Cytochrome c-type biogenesis protein CcmE 2 (139 aa).

Over 1–9 (MASLKKSRR) the chain is Cytoplasmic. A helical; Signal-anchor for type II membrane protein membrane pass occupies residues 10–30 (VRLILFSGVALVSATALIGYA). The Periplasmic segment spans residues 31–139 (MRDGIQFFRT…ELAEMEALRD (109 aa)). 2 residues coordinate heme: His-122 and Tyr-126.

Belongs to the CcmE/CycJ family.

It is found in the cell inner membrane. Heme chaperone required for the biogenesis of c-type cytochromes. Transiently binds heme delivered by CcmC and transfers the heme to apo-cytochromes in a process facilitated by CcmF and CcmH. This is Cytochrome c-type biogenesis protein CcmE 2 from Ruegeria pomeroyi (strain ATCC 700808 / DSM 15171 / DSS-3) (Silicibacter pomeroyi).